We begin with the raw amino-acid sequence, 301 residues long: Acetylglutamate kinase (301 aa).

Residues 72 to 73 (GG), Arg-94, and Asn-199 contribute to the substrate site.

The protein belongs to the acetylglutamate kinase family. ArgB subfamily.

It is found in the cytoplasm. The catalysed reaction is N-acetyl-L-glutamate + ATP = N-acetyl-L-glutamyl 5-phosphate + ADP. It functions in the pathway amino-acid biosynthesis; L-arginine biosynthesis; N(2)-acetyl-L-ornithine from L-glutamate: step 2/4. Functionally, catalyzes the ATP-dependent phosphorylation of N-acetyl-L-glutamate. This Azorhizobium caulinodans (strain ATCC 43989 / DSM 5975 / JCM 20966 / LMG 6465 / NBRC 14845 / NCIMB 13405 / ORS 571) protein is Acetylglutamate kinase.